Consider the following 296-residue polypeptide: uncharacterized protein (296 aa).

CBS domains are found at residues 176–232 (GIKE…DKKV) and 236–292 (MRRD…KFPE).

This is an uncharacterized protein from Methanocaldococcus jannaschii (strain ATCC 43067 / DSM 2661 / JAL-1 / JCM 10045 / NBRC 100440) (Methanococcus jannaschii).